The primary structure comprises 202 residues: MIMQKILLATSNRHKYLEFSRLLYPLTLEALPEDLKRLLPNETAKSYRDNAKLKGMALSEIYEGFVLADDSGLEVFSLHGEPGIFSSRYAGEGSSAQENIDKLLKNLQSKNITDRRARFVCALVLVKKKKILFETTAFCYGIIADRQKGGGGFGYDPIFIPEGYSLTMAELDEKQKDLVSHRGKACQELKAFFLENRMEGHS.

Threonine 10–lysine 15 contacts substrate. Aspartate 70 serves as the catalytic Proton acceptor. Aspartate 70 lines the Mg(2+) pocket. Substrate is bound by residues serine 71, phenylalanine 153–aspartate 156, lysine 176, and histidine 181–arginine 182.

This sequence belongs to the HAM1 NTPase family. Homodimer. Mg(2+) is required as a cofactor.

It catalyses the reaction XTP + H2O = XMP + diphosphate + H(+). It carries out the reaction dITP + H2O = dIMP + diphosphate + H(+). The catalysed reaction is ITP + H2O = IMP + diphosphate + H(+). In terms of biological role, pyrophosphatase that catalyzes the hydrolysis of nucleoside triphosphates to their monophosphate derivatives, with a high preference for the non-canonical purine nucleotides XTP (xanthosine triphosphate), dITP (deoxyinosine triphosphate) and ITP. Seems to function as a house-cleaning enzyme that removes non-canonical purine nucleotides from the nucleotide pool, thus preventing their incorporation into DNA/RNA and avoiding chromosomal lesions. This is dITP/XTP pyrophosphatase from Methylacidiphilum infernorum (isolate V4) (Methylokorus infernorum (strain V4)).